The sequence spans 447 residues: uncharacterized protein (447 aa).

Helical transmembrane passes span Ile-28–Val-48, Ile-241–Ile-261, and Pro-397–Phe-417.

It localises to the membrane. This is an uncharacterized protein from Schizosaccharomyces pombe (strain 972 / ATCC 24843) (Fission yeast).